A 456-amino-acid polypeptide reads, in one-letter code: Adenylosuccinate lyase (456 aa).

Residues 15–16, 90–92, and 122–123 each bind N(6)-(1,2-dicarboxyethyl)-AMP; these read RY, NHD, and TS. The active-site Proton donor/acceptor is the H171. Q247 is a N(6)-(1,2-dicarboxyethyl)-AMP binding site. The active-site Proton donor/acceptor is the S295. N(6)-(1,2-dicarboxyethyl)-AMP-binding positions include S296, 301-303, N309, R335, and 340-344; these read KVN and STVLR.

This sequence belongs to the lyase 1 family. Adenylosuccinate lyase subfamily. Homotetramer. Residues from neighboring subunits contribute catalytic and substrate-binding residues to each active site.

It catalyses the reaction N(6)-(1,2-dicarboxyethyl)-AMP = fumarate + AMP. The enzyme catalyses (2S)-2-[5-amino-1-(5-phospho-beta-D-ribosyl)imidazole-4-carboxamido]succinate = 5-amino-1-(5-phospho-beta-D-ribosyl)imidazole-4-carboxamide + fumarate. It functions in the pathway purine metabolism; AMP biosynthesis via de novo pathway; AMP from IMP: step 2/2. Its pathway is purine metabolism; IMP biosynthesis via de novo pathway; 5-amino-1-(5-phospho-D-ribosyl)imidazole-4-carboxamide from 5-amino-1-(5-phospho-D-ribosyl)imidazole-4-carboxylate: step 2/2. Catalyzes two reactions in de novo purine nucleotide biosynthesis. Catalyzes the breakdown of 5-aminoimidazole- (N-succinylocarboxamide) ribotide (SAICAR or 2-[5-amino-1-(5-phospho-beta-D-ribosyl)imidazole-4-carboxamido]succinate) to 5-aminoimidazole-4-carboxamide ribotide (AICAR or 5-amino-1-(5-phospho-beta-D-ribosyl)imidazole-4-carboxamide) and fumarate, and of adenylosuccinate (ADS or N(6)-(1,2-dicarboxyethyl)-AMP) to adenosine monophosphate (AMP) and fumarate. The protein is Adenylosuccinate lyase (purB) of Legionella pneumophila (strain Corby).